The following is a 476-amino-acid chain: Sulfate adenylyltransferase subunit 1 (476 aa).

Residues 24-243 form the tr-type G domain; that stretch reads KSLLRFLTCG…VDVEKEKEAG (220 aa). The G1 stretch occupies residues 33-40; sequence GSVDDGKS. 33 to 40 lines the GTP pocket; sequence GSVDDGKS. The interval 91–95 is G2; it reads GITID. Residues 112–115 form a G3 region; it reads DTPG. GTP-binding positions include 112–116 and 167–170; these read DTPGH and NKMD. The segment at 167–170 is G4; that stretch reads NKMD. A G5 region spans residues 205–207; it reads SAL.

Belongs to the TRAFAC class translation factor GTPase superfamily. Classic translation factor GTPase family. CysN/NodQ subfamily. As to quaternary structure, heterodimer composed of CysD, the smaller subunit, and CysN.

The enzyme catalyses sulfate + ATP + H(+) = adenosine 5'-phosphosulfate + diphosphate. It functions in the pathway sulfur metabolism; hydrogen sulfide biosynthesis; sulfite from sulfate: step 1/3. In terms of biological role, with CysD forms the ATP sulfurylase (ATPS) that catalyzes the adenylation of sulfate producing adenosine 5'-phosphosulfate (APS) and diphosphate, the first enzymatic step in sulfur assimilation pathway. APS synthesis involves the formation of a high-energy phosphoric-sulfuric acid anhydride bond driven by GTP hydrolysis by CysN coupled to ATP hydrolysis by CysD. In Vibrio vulnificus (strain YJ016), this protein is Sulfate adenylyltransferase subunit 1.